The primary structure comprises 388 residues: Probable proton-coupled zinc antiporter SLC30A3 (388 aa).

The disordered stretch occupies residues 1–46 (MEPSPAAGGLETTRLVSPRDRGGAGGSLRLKSLFTEPSEPLPEESK). Over 1–75 (MEPSPAAGGL…TPERLHARRQ (75 aa)) the chain is Cytoplasmic. Residues 76–96 (LYAACAVCFVFMAGEVVGGYL) traverse the membrane as a helical segment. Residues 97–105 (AHSLAIMTD) lie on the Lumenal side of the membrane. A helical transmembrane segment spans residues 106–126 (AAHLLADVGSMMGSLFSLWLS). Zn(2+) is bound by residues histidine 108 and aspartate 112. The Cytoplasmic segment spans residues 127-145 (TRPATRTMTFGWHRSETLG). Residues 146-166 (ALASVVSLWMVTGILLYLAFV) form a helical membrane-spanning segment. The Lumenal portion of the chain corresponds to 167 to 177 (RLLHSDYHIEG). A helical transmembrane segment spans residues 178–198 (GAMLLTASIAVCANLLMAFVL). At 199–235 (HQAGPPHSHGSRGAEYAPLEEGPEEPLPLGNTSVRAA) the chain is on the cytoplasmic side. Residues 236-256 (FVHVLGDLLQSFGVLAASILI) form a helical membrane-spanning segment. Residues histidine 238 and aspartate 242 each coordinate Zn(2+). Residues 257–264 (YFKPQYKA) are Lumenal-facing. The chain crosses the membrane as a helical span at residues 265-285 (ADPISTFLFSICALGSTAPTL). Residues 286–388 (RDVLRILMEG…CLRCQEPPQA (103 aa)) are Cytoplasmic-facing. A Dityrosine (Tyr-Tyr) (interchain with Y-372) cross-link involves residue tyrosine 357. A Dityrosine (Tyr-Tyr) (interchain with Y-357) cross-link involves residue tyrosine 372.

This sequence belongs to the cation diffusion facilitator (CDF) transporter (TC 2.A.4) family. SLC30A subfamily. As to quaternary structure, homodimer; dityrosine-linked. Homodimerization seems specific of the human protein and enhances the zinc transport efficiency. Interacts with TMEM163. Homodimerization through dityrosine bonds is stimulated by oxidative stress.

The protein resides in the cytoplasmic vesicle. It is found in the secretory vesicle. Its subcellular location is the synaptic vesicle membrane. The protein localises to the synapse. It localises to the synaptosome. The protein resides in the late endosome membrane. It is found in the lysosome membrane. It carries out the reaction Zn(2+)(in) + 2 H(+)(out) = Zn(2+)(out) + 2 H(+)(in). Its function is as follows. Probable proton-coupled zinc ion antiporter mediating the import of zinc from cytoplasm into synaptic vesicles and participating to cellular zinc ion homeostasis in the brain. This is Probable proton-coupled zinc antiporter SLC30A3 from Homo sapiens (Human).